The primary structure comprises 567 residues: Cytochrome P450 monooxygenase 69 (567 aa).

A helical membrane pass occupies residues 7–24 (ELAALTVVLLATGVLFYA). Asparagine 25, asparagine 81, asparagine 223, and asparagine 279 each carry an N-linked (GlcNAc...) asparagine glycan. Cysteine 475 lines the heme pocket.

Belongs to the cytochrome P450 family. Requires heme as cofactor.

The protein resides in the membrane. The protein operates within secondary metabolite biosynthesis. Cytochrome P450 monooxygenase that is able to use 4-ethoxybenzoic acid as a substrate for oxidation. This chain is Cytochrome P450 monooxygenase 69, found in Postia placenta (strain ATCC 44394 / Madison 698-R) (Brown rot fungus).